A 53-amino-acid polypeptide reads, in one-letter code: Sec-independent protein translocase protein TatA (53 aa).

The helical transmembrane segment at 1–21 (MGMSFSHLLIVLLIIFVLFGA) threads the bilayer.

This sequence belongs to the TatA/E family. In terms of assembly, the Tat system comprises two distinct complexes: a TatABC complex, containing multiple copies of TatA, TatB and TatC subunits, and a separate TatA complex, containing only TatA subunits. Substrates initially bind to the TatABC complex, which probably triggers association of the separate TatA complex to form the active translocon.

It localises to the cell inner membrane. Its function is as follows. Part of the twin-arginine translocation (Tat) system that transports large folded proteins containing a characteristic twin-arginine motif in their signal peptide across membranes. TatA could form the protein-conducting channel of the Tat system. The chain is Sec-independent protein translocase protein TatA from Rickettsia africae (strain ESF-5).